The sequence spans 125 residues: Small ribosomal subunit protein uS12m (125 aa).

The tract at residues 1–27 is disordered; that stretch reads MPTKNQLIRHGREEKRRTDRTRALDQC. Positions 10–23 are enriched in basic and acidic residues; sequence HGREEKRRTDRTRA.

Belongs to the universal ribosomal protein uS12 family.

Its subcellular location is the mitochondrion. In terms of biological role, protein S12 is involved in the translation initiation step. This is Small ribosomal subunit protein uS12m (RPS12) from Triticum aestivum (Wheat).